Reading from the N-terminus, the 443-residue chain is Ribosomal protein uS12 methylthiotransferase RimO (443 aa).

Positions 11-121 (PTVGFVSLGC…VMEAVHGALP (111 aa)) constitute an MTTase N-terminal domain. [4Fe-4S] cluster is bound by residues Cys-20, Cys-56, Cys-85, Cys-152, Cys-156, and Cys-159. A Radical SAM core domain is found at 138 to 375 (LTPRHYAYLK…METQAEISAA (238 aa)). Positions 378–443 (DAKIGRTIEV…DAHDLWATPV (66 aa)) constitute a TRAM domain.

The protein belongs to the methylthiotransferase family. RimO subfamily. [4Fe-4S] cluster serves as cofactor.

It is found in the cytoplasm. The catalysed reaction is L-aspartate(89)-[ribosomal protein uS12]-hydrogen + (sulfur carrier)-SH + AH2 + 2 S-adenosyl-L-methionine = 3-methylsulfanyl-L-aspartate(89)-[ribosomal protein uS12]-hydrogen + (sulfur carrier)-H + 5'-deoxyadenosine + L-methionine + A + S-adenosyl-L-homocysteine + 2 H(+). In terms of biological role, catalyzes the methylthiolation of an aspartic acid residue of ribosomal protein uS12. This Thiobacillus denitrificans (strain ATCC 25259 / T1) protein is Ribosomal protein uS12 methylthiotransferase RimO.